The following is a 722-amino-acid chain: Polymerase basic protein 2 (722 aa).

The RNA polymerase is composed of three subunits: PB1, PB2 and PA.

It localises to the virion. The protein localises to the host nucleus. Functionally, involved in transcription initiation and cap-stealing mechanism, in which cellular capped pre-mRNA are used to generate primers for viral transcription. Binds the cap of the target pre-RNA which is subsequently cleaved by PB1. May play a role in genome replication. This chain is Polymerase basic protein 2, found in Gadus morhua (Atlantic cod).